Reading from the N-terminus, the 282-residue chain is Orotidine 5'-phosphate decarboxylase (282 aa).

Residue K95 is the Proton donor of the active site.

The protein belongs to the OMP decarboxylase family. Type 2 subfamily.

The catalysed reaction is orotidine 5'-phosphate + H(+) = UMP + CO2. Its pathway is pyrimidine metabolism; UMP biosynthesis via de novo pathway; UMP from orotate: step 2/2. This is Orotidine 5'-phosphate decarboxylase (pyrF) from Mycobacterium leprae (strain TN).